The sequence spans 294 residues: Cyclin-dependent kinase A-1 (294 aa).

The Protein kinase domain occupies 4-287 (YEKVEKIGEG…ARAALEHEYF (284 aa)). Residues 10 to 18 (IGEGTYGVV) and Lys-33 contribute to the ATP site. Phosphotyrosine is present on Tyr-15. Residue Asp-127 is the Proton acceptor of the active site. Thr-161 bears the Phosphothreonine mark.

This sequence belongs to the protein kinase superfamily. CMGC Ser/Thr protein kinase family. CDC2/CDKX subfamily. As to quaternary structure, interacts with CDT1A, CYCA2-3, CYCD2-1, CYCD3-1, CYCD4-1, CYCD4-2, CYCH1-1, CYCU1-1, CYCU2-1, CYCU2-2, CYCU3-1, CYCU4-1, CYCU4-2, CYCU4-3, CKS1, KRP2/ICK2, KRP3/ICK6, KRP4/ICK7, KRP6/ICK4, KRP7/ICK5, and C-terminal domain of KRP1/ICK1. Interacts with WEE1 and TIF4A-1/EIF4A-1. Interacts with PAS2; when phosphorylated at Tyr-15. Interacts with SMR3, SMR4, SMR5, SMR6, SMR8 and At4g14310. Binds to CYCD3-2. Component of a DREAM-like complex which modulates a variety of developmentally regulated genes and of the mitotic genes in proliferating and differentiated cells. Interacts with MYB3R3 at later and with MYB3R4 at earlier stages of leaf development. May interact with SPCH. Post-translationally, phosphorylated at Tyr-15 by WEE1. Phosphorylation at Thr-161 is important for the kinase activity and substrate binding. Binding to the anti-phosphatase PAS2 prevents dephosphorylation. As to expression, expressed in roots, stems, flowers and siliques.

The protein localises to the cytoplasm. It localises to the nucleus. It carries out the reaction L-seryl-[protein] + ATP = O-phospho-L-seryl-[protein] + ADP + H(+). The catalysed reaction is L-threonyl-[protein] + ATP = O-phospho-L-threonyl-[protein] + ADP + H(+). It catalyses the reaction [DNA-directed RNA polymerase] + ATP = phospho-[DNA-directed RNA polymerase] + ADP + H(+). CDK kinase activated by CDKF-1. CDK kinase activity inhibited by KRP1/ICK1, KRP2/ICK2, KRP3/ICK6, KRP4/ICK7, KRP5/ICK3, KRP6/ICK4 and KRP7/ICK5. Down-regulated by phosphorylation by WEE1. Involved in the control of the cell cycle. Essential for both G1/S and G2/M (mitosis) phase transitions. Functions in cell morphogenesis as well as cell proliferation. Required for cell division (entry into mitosis) of the generative cell in male gametogenesis. Required to trigger guard mother cells (GMC) symmetric divisions at the late stage of stomatal development, probably via the regulation of G1 to S transition in the cell cycle. Required for the function of SPCH in entering the stomatal lineage. Promotes divisions in the guard cells (GCs) after the guard mother cells (GMC) symmetric division when in the presence of CYCD3-2 via the phosphorylation of SPCH. The sequence is that of Cyclin-dependent kinase A-1 from Arabidopsis thaliana (Mouse-ear cress).